The chain runs to 134 residues: ATP synthase epsilon chain (134 aa).

It belongs to the ATPase epsilon chain family. As to quaternary structure, F-type ATPases have 2 components, CF(1) - the catalytic core - and CF(0) - the membrane proton channel. CF(1) has five subunits: alpha(3), beta(3), gamma(1), delta(1), epsilon(1). CF(0) has three main subunits: a, b and c.

The protein localises to the cell membrane. Produces ATP from ADP in the presence of a proton gradient across the membrane. The polypeptide is ATP synthase epsilon chain (Staphylococcus saprophyticus subsp. saprophyticus (strain ATCC 15305 / DSM 20229 / NCIMB 8711 / NCTC 7292 / S-41)).